A 392-amino-acid polypeptide reads, in one-letter code: Methylthioribose kinase (392 aa).

Residues N38, K53, and 107-109 (EDL) each bind ATP. D225 contributes to the substrate binding site. Residue 242–244 (DPE) coordinates ATP. Residue R332 participates in substrate binding.

This sequence belongs to the methylthioribose kinase family. As to quaternary structure, homodimer.

The catalysed reaction is 5-(methylsulfanyl)-D-ribose + ATP = 5-(methylsulfanyl)-alpha-D-ribose 1-phosphate + ADP + H(+). Its pathway is amino-acid biosynthesis; L-methionine biosynthesis via salvage pathway; S-methyl-5-thio-alpha-D-ribose 1-phosphate from S-methyl-5'-thioadenosine (hydrolase route): step 2/2. In terms of biological role, catalyzes the phosphorylation of methylthioribose into methylthioribose-1-phosphate. In Bacillus mycoides (strain KBAB4) (Bacillus weihenstephanensis), this protein is Methylthioribose kinase.